We begin with the raw amino-acid sequence, 316 residues long: tRNA dimethylallyltransferase (316 aa).

9-16 lines the ATP pocket; that stretch reads GPTASGKS. 11-16 serves as a coordination point for substrate; sequence TASGKS. Interaction with substrate tRNA stretches follow at residues 34 to 37 and 158 to 162; these read DSMQ and QRLAR.

The protein belongs to the IPP transferase family. As to quaternary structure, monomer. It depends on Mg(2+) as a cofactor.

The catalysed reaction is adenosine(37) in tRNA + dimethylallyl diphosphate = N(6)-dimethylallyladenosine(37) in tRNA + diphosphate. Its function is as follows. Catalyzes the transfer of a dimethylallyl group onto the adenine at position 37 in tRNAs that read codons beginning with uridine, leading to the formation of N6-(dimethylallyl)adenosine (i(6)A). In Hyphomonas neptunium (strain ATCC 15444), this protein is tRNA dimethylallyltransferase.